Here is a 59-residue protein sequence, read N- to C-terminus: Large ribosomal subunit protein bL32 (59 aa).

Positions 1-28 are disordered; that stretch reads MAVQQNKKSPSKRGMHRAHDFLTDPPLA.

It belongs to the bacterial ribosomal protein bL32 family.

This is Large ribosomal subunit protein bL32 from Aromatoleum aromaticum (strain DSM 19018 / LMG 30748 / EbN1) (Azoarcus sp. (strain EbN1)).